A 322-amino-acid chain; its full sequence is Thiamine thiazole synthase (322 aa).

Substrate is bound by residues Cys84, 105–106 (EA), Gly113, and Val178. The residue at position 211 (Cys211) is a 2,3-didehydroalanine (Cys). Residues Asp213, His228, Met280, and 290–292 (RMG) each bind substrate.

This sequence belongs to the THI4 family. In terms of assembly, homooctamer. Fe cation serves as cofactor. During the catalytic reaction, a sulfide is transferred from Cys-211 to a reaction intermediate, generating a dehydroalanine residue.

It is found in the cytoplasm. The protein resides in the nucleus. The enzyme catalyses [ADP-thiazole synthase]-L-cysteine + glycine + NAD(+) = [ADP-thiazole synthase]-dehydroalanine + ADP-5-ethyl-4-methylthiazole-2-carboxylate + nicotinamide + 3 H2O + 2 H(+). Functionally, involved in biosynthesis of the thiamine precursor thiazole. Catalyzes the conversion of NAD and glycine to adenosine diphosphate 5-(2-hydroxyethyl)-4-methylthiazole-2-carboxylic acid (ADT), an adenylated thiazole intermediate. The reaction includes an iron-dependent sulfide transfer from a conserved cysteine residue of the protein to a thiazole intermediate. The enzyme can only undergo a single turnover, which suggests it is a suicide enzyme. May have additional roles in adaptation to various stress conditions and in DNA damage tolerance. The sequence is that of Thiamine thiazole synthase from Fusarium vanettenii (strain ATCC MYA-4622 / CBS 123669 / FGSC 9596 / NRRL 45880 / 77-13-4) (Fusarium solani subsp. pisi).